Reading from the N-terminus, the 176-residue chain is Envelope protein 167 (176 aa).

Methionine 1 is a topological domain (intravirion). The helical transmembrane segment at tyrosine 2 to isoleucine 22 threads the bilayer. The Virion surface segment spans residues serine 23 to leucine 176.

The protein belongs to the asfivirus envelope protein p22 family.

It localises to the virion membrane. The protein resides in the host cell membrane. This African swine fever virus (isolate Warthog/Namibia/Wart80/1980) (ASFV) protein is Envelope protein 167.